Here is a 692-residue protein sequence, read N- to C-terminus: MARKTPLNRIRNIGIAAHIDAGKTTTSERILFYTGVSHKIGEVHDGAATMDWMEQEKERGITITSAATTCFWKDHQINLIDTPGHVDFTIEVERSMRVLDGAVSVFCSVGGVQPQSETVWRQANKYGVPRIVFVNKMDRIGANFYNVENQIKLRLKANPVPINIPIGAEDTFIGVIDLVQMKAIVWNNETMGSKYDVEEIPSDLLEKAKQYREKLVEAVAEQDEALMEKYLGGEELSVEEIKKGIKTGCLNMSLVPMLCGSSFKNKGVQTLLDAVIDYLPAPTEVVDIKGIDPKTEEEVFVKSSDDGEFAGLAFKIMTDPFVGQLTFVRVYRGKLESGSYVYNSTKDKKERVGRLLKMHSNKREDIKEVYAGEICAFVGLKDTLTGDTLCDEKNAVVLERMEFPEPVIHIAVEPKTKADQEKMGVALGKLAEEDPSFRVMTQEETGQTLIGGMGELHLEIIVDRLKREFKVEAEIGQPQVAFRETIRSSVSKEHKYAKQSGGRGQYGHVFIKLEPKEPGSGYEFVNEISGGVIPKEYIPAVDKGIQEAMQNGVLAGYPVVDFKVTLYDGSYHDVDSSEMAFKIAGSMAFKEASRAANPVLLEPMMKVEVEVPEEYMGDVIGDLNRRRGQINSMDDRLGLKIVNAFVPLVEMFGYSTDLRSATQGRGTYSMEFDHYGEVPSNIAKEIVEKRKG.

The tr-type G domain occupies 8–283; it reads NRIRNIGIAA…AVIDYLPAPT (276 aa). Residues 17–24, 81–85, and 135–138 contribute to the GTP site; these read AHIDAGKT, DTPGH, and NKMD.

The protein belongs to the TRAFAC class translation factor GTPase superfamily. Classic translation factor GTPase family. EF-G/EF-2 subfamily.

It is found in the cytoplasm. In terms of biological role, catalyzes the GTP-dependent ribosomal translocation step during translation elongation. During this step, the ribosome changes from the pre-translocational (PRE) to the post-translocational (POST) state as the newly formed A-site-bound peptidyl-tRNA and P-site-bound deacylated tRNA move to the P and E sites, respectively. Catalyzes the coordinated movement of the two tRNA molecules, the mRNA and conformational changes in the ribosome. The protein is Elongation factor G of Helicobacter pylori (strain HPAG1).